The chain runs to 619 residues: Chaperone protein HscA homolog (619 aa).

Belongs to the heat shock protein 70 family.

Chaperone involved in the maturation of iron-sulfur cluster-containing proteins. Has a low intrinsic ATPase activity which is markedly stimulated by HscB. The sequence is that of Chaperone protein HscA homolog from Pseudomonas aeruginosa (strain UCBPP-PA14).